We begin with the raw amino-acid sequence, 264 residues long: Thymidylate synthase (264 aa).

DUMP is bound by residues R21 and R126–R127. The active-site Nucleophile is C146. Residues R166–D169, N177, and H207–Y209 contribute to the dUMP site. D169 contributes to the (6R)-5,10-methylene-5,6,7,8-tetrahydrofolate binding site. A263 provides a ligand contact to (6R)-5,10-methylene-5,6,7,8-tetrahydrofolate.

Belongs to the thymidylate synthase family. Bacterial-type ThyA subfamily. In terms of assembly, homodimer.

It is found in the cytoplasm. The enzyme catalyses dUMP + (6R)-5,10-methylene-5,6,7,8-tetrahydrofolate = 7,8-dihydrofolate + dTMP. The protein operates within pyrimidine metabolism; dTTP biosynthesis. Its function is as follows. Catalyzes the reductive methylation of 2'-deoxyuridine-5'-monophosphate (dUMP) to 2'-deoxythymidine-5'-monophosphate (dTMP) while utilizing 5,10-methylenetetrahydrofolate (mTHF) as the methyl donor and reductant in the reaction, yielding dihydrofolate (DHF) as a by-product. This enzymatic reaction provides an intracellular de novo source of dTMP, an essential precursor for DNA biosynthesis. In Rhodopseudomonas palustris (strain HaA2), this protein is Thymidylate synthase.